We begin with the raw amino-acid sequence, 241 residues long: MAMKIDILTLFPEMFDIFNHSIIGRAIDKGILKIQSHNIRDYSMNKHKKVDDYPYGGGAGMVMTPQPIVDSIKDLKINNKGKVIFLGPRGKTFNQEIAKTLSKEKELIFICGHYEGIDERVYKYIDEEISLGDFVLTGGEMACIPVVDSICRLVPGVLSSSESYMEESFYNGLLEYPQYTRPECFEGENVPKVLLSGHHDNIRKWRRYKSLTITKTRRPDLFKQITLSKEDKKLLEIYSKE.

S-adenosyl-L-methionine is bound by residues glycine 112 and 131-136 (LGDFVL).

Belongs to the RNA methyltransferase TrmD family. Homodimer.

The protein resides in the cytoplasm. It catalyses the reaction guanosine(37) in tRNA + S-adenosyl-L-methionine = N(1)-methylguanosine(37) in tRNA + S-adenosyl-L-homocysteine + H(+). Its function is as follows. Specifically methylates guanosine-37 in various tRNAs. The sequence is that of tRNA (guanine-N(1)-)-methyltransferase from Clostridium novyi (strain NT).